Here is an 83-residue protein sequence, read N- to C-terminus: uncharacterized protein (83 aa).

Residues Y58–L80 form a helical membrane-spanning segment.

The protein resides in the membrane. This is an uncharacterized protein from Bacillus subtilis (strain 168).